The following is a 180-amino-acid chain: High mobility group protein B1 (180 aa).

The short motif at 1–8 (VNFSEFSK) is the Nuclear localization signal (NLS) 1 element. The segment at residues 1 to 44 (VNFSEFSKKCSERWKTMSAKEKGKFEDMAKADKARYEREMKTYI) is a DNA-binding region (HMG box 1). Position 8 is an N6-acetyllysine (lysine 8). Isoglutamyl lysine isopeptide (Lys-Gln) (interchain with Q-?) cross-links involve residues lysine 8 and lysine 9. A Cysteine sulfonic acid (-SO3H) modification is found at cysteine 10. An Isoglutamyl lysine isopeptide (Lys-Gln) (interchain with Q-?) cross-link involves residue lysine 33. The interval 45–61 (PPKGETKKKFKDPNAPK) is LPS binding (Lipid A). The interval 54–73 (FKDPNAPKRPPSAFFLFCSE) is cytokine-stimulating activity. Position 55 is an N6-acetyllysine (lysine 55). The segment at residues 60 to 128 (PKRPPSAFFL…KYEKDIAAYR (69 aa)) is a DNA-binding region (HMG box 2). Residue serine 65 is modified to Phosphoserine. Cysteine 71 is subject to Cysteine sulfonic acid (-SO3H). An N6-acetyllysine mark is found at lysine 92, lysine 93, lysine 106, lysine 137, lysine 138, lysine 142, and lysine 145. The tract at residues 115–148 (KLKEKYEKDIAAYRAKGKPDAAKKGVVKAEKSKK) is binding to AGER/RAGE. Positions 126–144 (AYRAKGKPDAAKKGVVKAE) are enriched in basic and acidic residues. The disordered stretch occupies residues 126–180 (AYRAKGKPDAAKKGVVKAEKSKKKKEEEDDEEDEEDEEEEEEEEDEDEEEDDDDE). Residues 143–149 (AEKSKKK) carry the Nuclear localization signal (NLS) 2 motif. An NLS 2 region spans residues 143-149 (AEKSKKK). An Isoglutamyl lysine isopeptide (Lys-Gln) (interchain with Q-?) cross-link involves residue lysine 145. Serine 146 carries the post-translational modification ADP-ribosylserine. Residues lysine 147, lysine 148, lysine 149, and lysine 150 each carry the N6-acetyllysine modification. Isoglutamyl lysine isopeptide (Lys-Gln) (interchain with Q-?) cross-links involve residues lysine 147, lysine 148, and lysine 149. Acidic residues predominate over residues 152–180 (EEDDEEDEEDEEEEEEEEDEDEEEDDDDE).

Belongs to the HMGB family. In terms of assembly, interacts (fully reduced HMGB1) with CXCL12; probably in a 1:2 ratio involving two molecules of CXCL12, each interacting with one HMG box of HMGB1; inhibited by glycyrrhizin. Associates with the TLR4:LY96 receptor complex. Component of the RAG complex composed of core components RAG1 and RAG2, and associated component HMGB1 or HMGB2. Interacts (in cytoplasm upon starvation) with BECN1; inhibits the interaction of BECN1 and BCL2 leading to promotion of autophagy. Interacts with KPNA1; involved in nuclear import. Interacts with SREBF1, TLR2, TLR4, TLR9, PTPRZ1, APEX1, FEN1, POLB, TERT. Interacts with IL1B, AGER, MSH2, XPA, XPC, HNF1A, TP53. Interacts with CD24; the probable CD24:SIGLEC10 complex is proposed to inhibit HGMB1-mediated tissue damage immune response. Interacts with THBD; prevents HGMB1 interaction with ACER/RAGE and inhibits HGMB1 pro-inflammatory activity. Interacts with HAVCR2; impairs HMGB1 binding to B-DNA and likely HMGB1-mediated innate immune response. Interacts with XPO1; mediating nuclear export. Interacts with receptor RAGE/AGER. Post-translationally, phosphorylated at serine residues. Phosphorylation in both NLS regions is required for cytoplasmic translocation followed by secretion. Acetylated on multiple sites upon stimulation with LPS. Acetylation on lysine residues in the nuclear localization signals (NLS 1 and NLS 2) leads to cytoplasmic localization and subsequent secretion. In terms of processing, reduction/oxidation of cysteine residues and a possible intramolecular disulfide bond give rise to different redox forms with specific functional activities in various cellular compartments: 1- fully reduced HMGB1 (HMGB1C23hC45hC106h), 2-disulfide HMGB1 (HMGB1C23-C45C106h) and 3- sulfonyl HMGB1 (HMGB1C23soC45soC106so). Post-translationally, poly-ADP-ribosylated by PARP1 when secreted following stimulation with LPS. In vitro cleavage by CASP1 is liberating a HMG box 1-containing peptide which may mediate immunogenic activity; the peptide antagonizes apoptosis-induced immune tolerance. Can be proteolytically cleaved by a thrombin:thrombomodulin complex; reduces binding to heparin and pro-inflammatory activities. In terms of processing, forms covalent cross-links mediated by transglutaminase TGM2, between a glutamine and the epsilon-amino group of a lysine residue, forming homopolymers and heteropolymers.

The protein resides in the nucleus. Its subcellular location is the chromosome. It localises to the cytoplasm. The protein localises to the secreted. It is found in the cell membrane. The protein resides in the endosome. Its subcellular location is the endoplasmic reticulum-Golgi intermediate compartment. In terms of biological role, multifunctional redox sensitive protein with various roles in different cellular compartments. In the nucleus is one of the major chromatin-associated non-histone proteins and acts as a DNA chaperone involved in replication, transcription, chromatin remodeling, V(D)J recombination, DNA repair and genome stability. Proposed to be an universal biosensor for nucleic acids. Promotes host inflammatory response to sterile and infectious signals and is involved in the coordination and integration of innate and adaptive immune responses. In the cytoplasm functions as a sensor and/or chaperone for immunogenic nucleic acids implicating the activation of TLR9-mediated immune responses, and mediates autophagy. Acts as a danger-associated molecular pattern (DAMP) molecule that amplifies immune responses during tissue injury. Released to the extracellular environment can bind DNA, nucleosomes, IL-1 beta, CXCL12, AGER isoform 2/sRAGE, lipopolysaccharide (LPS) and lipoteichoic acid (LTA), and activates cells through engagement of multiple surface receptors. In the extracellular compartment fully reduced HMGB1 (released by necrosis) acts as a chemokine, disulfide HMGB1 (actively secreted) as a cytokine, and sulfonyl HMGB1 (released from apoptotic cells) promotes immunological tolerance. Has proangiogenic activity. May be involved in platelet activation. Binds to phosphatidylserine and phosphatidylethanolamide. Bound to RAGE mediates signaling for neuronal outgrowth. May play a role in accumulation of expanded polyglutamine (polyQ) proteins. Functionally, nuclear functions are attributed to fully reduced HGMB1. Associates with chromatin and binds DNA with a preference to non-canonical DNA structures such as single-stranded DNA, DNA-containing cruciforms or bent structures, supercoiled DNA and ZDNA. Can bent DNA and enhance DNA flexibility by looping thus providing a mechanism to promote activities on various gene promoters by enhancing transcription factor binding and/or bringing distant regulatory sequences into close proximity. May be involved in nucleotide excision repair (NER), mismatch repair (MMR) and base excision repair (BER) pathways, and double strand break repair such as non-homologous end joining (NHEJ). Involved in V(D)J recombination by acting as a cofactor of the RAG complex: acts by stimulating cleavage and RAG protein binding at the 23 bp spacer of conserved recombination signal sequences (RSS). In vitro can displace histone H1 from highly bent DNA. Can restructure the canonical nucleosome leading to relaxation of structural constraints for transcription factor-binding. Enhances binding of sterol regulatory element-binding proteins (SREBPs) such as SREBF1 to their cognate DNA sequences and increases their transcriptional activities. Facilitates binding of TP53 to DNA. May be involved in mitochondrial quality control and autophagy in a transcription-dependent fashion implicating HSPB1. Can modulate the activity of the telomerase complex and may be involved in telomere maintenance. In the cytoplasm proposed to dissociate the BECN1:BCL2 complex via competitive interaction with BECN1 leading to autophagy activation. Can protect BECN1 and ATG5 from calpain-mediated cleavage and thus proposed to control their proautophagic and proapoptotic functions and to regulate the extent and severity of inflammation-associated cellular injury. In myeloid cells has a protective role against endotoxemia and bacterial infection by promoting autophagy. Involved in endosomal translocation and activation of TLR9 in response to CpG-DNA in macrophages. Its function is as follows. In the extracellular compartment (following either active secretion or passive release) involved in regulation of the inflammatory response. Fully reduced HGMB1 (which subsequently gets oxidized after release) in association with CXCL12 mediates the recruitment of inflammatory cells during the initial phase of tissue injury; the CXCL12:HMGB1 complex triggers CXCR4 homodimerization. Induces the migration of monocyte-derived immature dendritic cells and seems to regulate adhesive and migratory functions of neutrophils implicating AGER/RAGE and ITGAM. Can bind to various types of DNA and RNA including microbial unmethylated CpG-DNA to enhance the innate immune response to nucleic acids. Proposed to act in promiscuous DNA/RNA sensing which cooperates with subsequent discriminative sensing by specific pattern recognition receptors. Promotes extracellular DNA-induced AIM2 inflammasome activation implicating AGER/RAGE. Disulfide HMGB1 binds to transmembrane receptors, such as AGER/RAGE, TLR2, TLR4 and probably TREM1, thus activating their signal transduction pathways. Mediates the release of cytokines/chemokines such as TNF, IL-1, IL-6, IL-8, CCL2, CCL3, CCL4 and CXCL10. Promotes secretion of interferon-gamma by macrophage-stimulated natural killer (NK) cells in concert with other cytokines like IL-2 or IL-12. TLR4 is proposed to be the primary receptor promoting macrophage activation and signaling through TLR4 seems to implicate LY96/MD-2. In bacterial LPS- or LTA-mediated inflammatory responses binds to the endotoxins and transfers them to CD14 for signaling to the respective TLR4:LY96 and TLR2 complexes. Contributes to tumor proliferation by association with ACER/RAGE. Can bind to IL1-beta and signals through the IL1R1:IL1RAP receptor complex. Binding to class A CpG activates cytokine production in plasmacytoid dendritic cells implicating TLR9, MYD88 and AGER/RAGE and can activate autoreactive B cells. Via HMGB1-containing chromatin immune complexes may also promote B cell responses to endogenous TLR9 ligands through a B-cell receptor (BCR)-dependent and ACER/RAGE-independent mechanism. Inhibits phagocytosis of apoptotic cells by macrophages; the function is dependent on poly-ADP-ribosylation and involves binding to phosphatidylserine on the cell surface of apoptotic cells. In adaptive immunity may be involved in enhancing immunity through activation of effector T-cells and suppression of regulatory T (TReg) cells. In contrast, without implicating effector or regulatory T-cells, required for tumor infiltration and activation of T-cells expressing the lymphotoxin LTA:LTB heterotrimer thus promoting tumor malignant progression. Also reported to limit proliferation of T-cells. Released HMGB1:nucleosome complexes formed during apoptosis can signal through TLR2 to induce cytokine production. Involved in induction of immunological tolerance by apoptotic cells; its pro-inflammatory activities when released by apoptotic cells are neutralized by reactive oxygen species (ROS)-dependent oxidation specifically on Cys-106. During macrophage activation by activated lymphocyte-derived self apoptotic DNA (ALD-DNA) promotes recruitment of ALD-DNA to endosomes. This is High mobility group protein B1 (HMGB1) from Cricetulus griseus (Chinese hamster).